A 237-amino-acid polypeptide reads, in one-letter code: (5-formylfuran-3-yl)methyl phosphate synthase (237 aa).

The Schiff-base intermediate with substrate role is filled by K27. Residue K85 is the Proton acceptor of the active site.

Belongs to the MfnB family.

It carries out the reaction 2 D-glyceraldehyde 3-phosphate = 4-(hydroxymethyl)-2-furancarboxaldehyde phosphate + phosphate + 2 H2O. It functions in the pathway cofactor biosynthesis; methanofuran biosynthesis. Functionally, catalyzes the formation of 4-(hydroxymethyl)-2-furancarboxaldehyde phosphate (4-HFC-P) from two molecules of glyceraldehyde-3-P (GA-3-P). This chain is (5-formylfuran-3-yl)methyl phosphate synthase, found in Methanobrevibacter smithii (strain ATCC 35061 / DSM 861 / OCM 144 / PS).